A 378-amino-acid polypeptide reads, in one-letter code: Probable G-protein coupled receptor frpr-1 (378 aa).

7 consecutive transmembrane segments (helical) span residues 47–67 (LVVI…GNAL), 85–105 (LFAL…LFFL), 120–140 (AVLS…SVFI), 180–200 (VIVC…YNSP), 243–263 (TIVM…AIVI), 277–297 (IITL…PLTV), and 315–337 (SNLM…GSNF).

The protein belongs to the G-protein coupled receptor 1 family.

It is found in the cell membrane. The polypeptide is Probable G-protein coupled receptor frpr-1 (Caenorhabditis elegans).